We begin with the raw amino-acid sequence, 198 residues long: Nuclear transcription factor Y subunit A-4 (198 aa).

Residues 1 to 47 are disordered; it reads MTSSVHELSDNNESHAKKERPDSQTRPQVPSGRSSESIDTNSVYSEP. Positions 7 to 23 are enriched in basic and acidic residues; it reads ELSDNNESHAKKERPDS. Polar residues predominate over residues 24 to 44; that stretch reads QTRPQVPSGRSSESIDTNSVY. A Subunit association domain (SAD) motif is present at residues 101 to 124; the sequence is FVNAKQYHGILRRRQSRAKLEARN. Positions 131–156 form a DNA-binding region, NFYA/HAP2-type; it reads KPYMHESRHLHAIRRPRGCGGRFLNA. The segment at 136–198 is disordered; the sequence is ESRHLHAIRR…MATSGPNGRS (63 aa). Positions 156–166 are enriched in basic and acidic residues; the sequence is AKKENGDHKEE.

The protein belongs to the NFYA/HAP2 subunit family. As to quaternary structure, heterotrimeric transcription factor composed of three components, NF-YA, NF-YB and NF-YC. NF-YB and NF-YC must interact and dimerize for NF-YA association and DNA binding. As to expression, expressed in stems, caulines, and senescent flowers.

The protein localises to the nucleus. Functionally, stimulates the transcription of various genes by recognizing and binding to a CCAAT motif in promoters. The sequence is that of Nuclear transcription factor Y subunit A-4 (NFYA4) from Arabidopsis thaliana (Mouse-ear cress).